We begin with the raw amino-acid sequence, 376 residues long: MSQIFADRRAAVPARVISFCGAALAVWAGLAVQPAMAVDPPVDCGRALGLHFWSSASLISDQTPDGTLIGKPVVGRSLLSKSCKVPDDIKEDLSDNHDGEPVDIVLELGSNYKIRPQSYGHPGIVVDLPFGSTEETGIAIYIDFGSSPMQKVGERQWLYPQKGEVLFDVLTINGDNAEVRYQAIKVGPLKRPRKLVLSQFPNLFTYKWVFMRGTSQERVLAQGTIDTDVATSTIDLKTCRYTSQTVSLPIIQRSALTGVGTTLGMTDFQMPFWCYGWPKVSVYMSATKTQTGVDGVALPATGQAAGMASGVGVQLINGKTQQPVKLGLQGKIALPEAQQTESATFSLPMKAQYYQTSTSTSAGKLSVTYAVTLNYD.

Residues 1-37 (MSQIFADRRAAVPARVISFCGAALAVWAGLAVQPAMA) form the signal peptide.

This chain is Protein FhaE (fhaE), found in Bordetella pertussis (strain Tohama I / ATCC BAA-589 / NCTC 13251).